Reading from the N-terminus, the 243-residue chain is Phosphate-specific transport system accessory protein PhoU (243 aa).

It belongs to the PhoU family. As to quaternary structure, homodimer.

It is found in the cytoplasm. In terms of biological role, part of the phosphate (Pho) regulon, which plays a key role in phosphate homeostasis. Encoded together with proteins of the phosphate-specific transport (Pst) system in the polycistronic pstSCAB-phoU operon. PhoU is essential for the repression of the Pho regulon at high phosphate conditions. In this role, it may bind, possibly as a chaperone, to PhoR, PhoB or a PhoR-PhoB complex to promote dephosphorylation of phospho-PhoB, or inhibit formation of the PhoR-PhoB transitory complex. The protein is Phosphate-specific transport system accessory protein PhoU of Serratia marcescens.